A 363-amino-acid polypeptide reads, in one-letter code: Probable methyltransferase-like protein 24 (363 aa).

A signal peptide spans 1–38; sequence MGTAKPPGRGCGALPRWLLGAALLLGLRLCMELRHAGS. Residues 37 to 62 form a disordered region; sequence GSGPPGRRDLRGPPRTHLLPAPGPLR.

The protein belongs to the methyltransferase superfamily.

Its subcellular location is the secreted. Probable methyltransferase. This is Probable methyltransferase-like protein 24 (Mettl24) from Rattus norvegicus (Rat).